A 122-amino-acid chain; its full sequence is Large ribosomal subunit protein eL34 (122 aa).

This sequence belongs to the eukaryotic ribosomal protein eL34 family.

In Dictyostelium discoideum (Social amoeba), this protein is Large ribosomal subunit protein eL34 (rpl34).